We begin with the raw amino-acid sequence, 338 residues long: Glycerol-3-phosphate dehydrogenase [NAD(P)+] (338 aa).

Ser-14, Tyr-15, His-35, and Lys-109 together coordinate NADPH. Sn-glycerol 3-phosphate-binding residues include Lys-109, Gly-138, and Thr-140. Ala-142 provides a ligand contact to NADPH. Sn-glycerol 3-phosphate is bound by residues Lys-194, Asp-247, Ser-257, Arg-258, and Asn-259. The active-site Proton acceptor is Lys-194. Arg-258 serves as a coordination point for NADPH. Residues Val-282 and Glu-284 each contribute to the NADPH site.

The protein belongs to the NAD-dependent glycerol-3-phosphate dehydrogenase family.

Its subcellular location is the cytoplasm. It catalyses the reaction sn-glycerol 3-phosphate + NAD(+) = dihydroxyacetone phosphate + NADH + H(+). It carries out the reaction sn-glycerol 3-phosphate + NADP(+) = dihydroxyacetone phosphate + NADPH + H(+). Its pathway is membrane lipid metabolism; glycerophospholipid metabolism. Functionally, catalyzes the reduction of the glycolytic intermediate dihydroxyacetone phosphate (DHAP) to sn-glycerol 3-phosphate (G3P), the key precursor for phospholipid synthesis. The polypeptide is Glycerol-3-phosphate dehydrogenase [NAD(P)+] (Shewanella baltica (strain OS155 / ATCC BAA-1091)).